Reading from the N-terminus, the 68-residue chain is MMKKSMLLLFFLGMVSFSLADDKREDEGEEKRADEGEEKRAAEEKRFIKELLPHLSGIIDSVANAIKG.

The N-terminal stretch at 1–20 (MMKKSMLLLFFLGMVSFSLA) is a signal peptide. The propeptide occupies 21 to 44 (DDKREDEGEEKRADEGEEKRAAEE). Positions 22–41 (DKREDEGEEKRADEGEEKRA) are disordered. The residue at position 67 (lysine 67) is a Lysine amide.

The protein belongs to the frog skin active peptide (FSAP) family. Brevinin subfamily. As to expression, expressed by the skin dorsal glands.

It is found in the secreted. Functionally, peptide with potent vasoconstrictor properties (EC50=25 pM). Has moderate antimicrobial activity against Gram-positive bacterium S.aureus (MIC=55 uM) and against Gram-negative bacterium E.coli (MIC=110 uM). Not active against fungus C.albicans. Has weak hemolytic activity against horse erythrocytes. The chain is Kasstasin from Phlyctimantis maculatus (Red-legged running frog).